A 329-amino-acid polypeptide reads, in one-letter code: Glycerol-3-phosphate dehydrogenase [NAD(P)+] (329 aa).

NADPH contacts are provided by S13, W14, H34, and K105. K105, G134, and S136 together coordinate sn-glycerol 3-phosphate. A138 is an NADPH binding site. Residues K189, D242, S252, R253, and N254 each coordinate sn-glycerol 3-phosphate. The active-site Proton acceptor is the K189. Residue R253 participates in NADPH binding. NADPH contacts are provided by V277 and E279.

The protein belongs to the NAD-dependent glycerol-3-phosphate dehydrogenase family.

The protein resides in the cytoplasm. It catalyses the reaction sn-glycerol 3-phosphate + NAD(+) = dihydroxyacetone phosphate + NADH + H(+). The enzyme catalyses sn-glycerol 3-phosphate + NADP(+) = dihydroxyacetone phosphate + NADPH + H(+). The protein operates within membrane lipid metabolism; glycerophospholipid metabolism. Its function is as follows. Catalyzes the reduction of the glycolytic intermediate dihydroxyacetone phosphate (DHAP) to sn-glycerol 3-phosphate (G3P), the key precursor for phospholipid synthesis. The chain is Glycerol-3-phosphate dehydrogenase [NAD(P)+] from Legionella pneumophila subsp. pneumophila (strain Philadelphia 1 / ATCC 33152 / DSM 7513).